Here is a 926-residue protein sequence, read N- to C-terminus: Serine/threonine-protein kinase SIK2 (926 aa).

Residues 20–271 (YDIEGTLGKG…IAQIKEHKWM (252 aa)) form the Protein kinase domain. Residue T25 is modified to Phosphothreonine. ATP is bound by residues 26–34 (LGKGNFAVV) and K49. K53 carries the N6-acetyllysine; by EP300 modification. Residue D142 is the Proton acceptor of the active site. The residue at position 175 (T175) is a Phosphothreonine; by LKB1. One can recognise a UBA domain in the interval 295 to 335 (EFNEQVLRLMHSLGIDQQKTIESLQNKSYNHFAAIYFLLVE). T484 carries the phosphothreonine modification. Phosphoserine occurs at positions 534 and 587. 2 stretches are compositionally biased toward low complexity: residues 644 to 659 (SSCP…ESVS) and 742 to 756 (SSYP…LPRQ). Disordered regions lie at residues 644 to 666 (SSCP…ASVH), 742 to 776 (SSYP…PLSP), and 801 to 896 (PLPS…SSYD). The span at 765-774 (APPFSLTQPL) shows a compositional bias: polar residues. The span at 822-834 (QPPPPPPPPPPRQ) shows a compositional bias: pro residues.

The protein belongs to the protein kinase superfamily. CAMK Ser/Thr protein kinase family. SNF1 subfamily. As to quaternary structure, interacts with and phosphorylates TORC2/CRTC2. Mg(2+) serves as cofactor. Post-translationally, phosphorylated at Thr-175 by STK11/LKB1 in complex with STE20-related adapter-alpha (STRADA) pseudo kinase and CAB39. Phosphorylated at Thr-484 in response to insulin in adipocytes. Acetylation at Lys-53 inhibits kinase activity. Deacetylated by HDAC6.

It localises to the cytoplasm. Its subcellular location is the endoplasmic reticulum membrane. The catalysed reaction is L-seryl-[protein] + ATP = O-phospho-L-seryl-[protein] + ADP + H(+). It catalyses the reaction L-threonyl-[protein] + ATP = O-phospho-L-threonyl-[protein] + ADP + H(+). Activated by phosphorylation on Thr-175. Functionally, serine/threonine-protein kinase that plays a role in many biological processes such as fatty acid oxidation, autophagy, immune response or glucose metabolism. Phosphorylates 'Ser-794' of IRS1 in insulin-stimulated adipocytes, potentially modulating the efficiency of insulin signal transduction. Inhibits CREB activity by phosphorylating and repressing TORCs, the CREB-specific coactivators. Phosphorylates EP300 and thus inhibits its histone acetyltransferase activity. In turn, regulates the DNA-binding ability of several transcription factors such as PPARA or MLXIPL. Also plays a role in thymic T-cell development. The protein is Serine/threonine-protein kinase SIK2 (SIK2) of Homo sapiens (Human).